A 174-amino-acid chain; its full sequence is Cytidylate kinase (174 aa).

Residue glycine 7–threonine 15 participates in ATP binding.

Belongs to the cytidylate kinase family. Type 2 subfamily.

It localises to the cytoplasm. The enzyme catalyses CMP + ATP = CDP + ADP. The catalysed reaction is dCMP + ATP = dCDP + ADP. The protein is Cytidylate kinase of Methanococcus vannielii (strain ATCC 35089 / DSM 1224 / JCM 13029 / OCM 148 / SB).